The primary structure comprises 673 residues: MAKLETLPVRADPGRDPLLAFAPRPSELGPPDPRLAMGSVGSGVAHAQEFAMKSVGTRTGGGGSQGSFPGPRGSGSGASRERPGRYPSEDKGLANSLYLNGELRGSDHTDVCGNVVGSSGGSSSSGGSDKAPPQYREPSHPPKLLATSGKLDQCSEPLVRPSAFKPVVPKNFHSMQNLCPPQTNGTPEGRQGPGGLKGGLDKSRTMTPAGGSGSGLSDSGRNSLTSLPTYSSSYSQHLAPLSASTSHINRIGTASYGSGSGGSSGGGSGYQDLGTSDSGRASSKSGSSSSMGRPGHLGSGEGGGGGLPFAACSPPSPSALIQELEERLWEKEQEVAALRRSLEQSEAAVAQVLEERQKAWERELAELRQGCSGKLQQVARRAQRAQQGLQLQVLRLQQDKKQLQEEAARLMRQREELEDKVAACQKEQADFLPRIEETKWEVCQKAGEISLLKQQLKDSQADVSQKLSEIVGLRSQLREGRASLREKEEQLLSLRDSFSSKQASLELGEGELPAACLKPALTPVDPAEPQDALATCESDEAKMRRQAGVAAAASLVSVDGEAEAGGESGTRALRREVGRLQAELAAERRARERQGASFAEERRVWLEEKEKVIEYQKQLQLSYVEMYQRNQQLERRLRERGAAGGASTPTPQHGEEKKAWTPSRLERIESTEI.

Disordered stretches follow at residues 1–157 (MAKL…CSEP), 172–239 (FHSM…QHLA), and 251–317 (IGTA…PPSP). Basic and acidic residues predominate over residues 79-92 (SRERPGRYPSEDKG). The span at 173–186 (HSMQNLCPPQTNGT) shows a compositional bias: polar residues. Low complexity predominate over residues 215–235 (GLSDSGRNSLTSLPTYSSSYS). The segment covering 258-269 (SGSGGSSGGGSG) has biased composition (gly residues). Positions 274-294 (GTSDSGRASSKSGSSSSMGRP) are enriched in low complexity. Positions 295–307 (GHLGSGEGGGGGL) are enriched in gly residues. Phosphoserine occurs at positions 316 and 318. Coiled coils occupy residues 317 to 496 (PSAL…SLRD) and 571 to 639 (RALR…RLRE). The disordered stretch occupies residues 635 to 673 (RRLRERGAAGGASTPTPQHGEEKKAWTPSRLERIESTEI). Positions 653–673 (HGEEKKAWTPSRLERIESTEI) are enriched in basic and acidic residues.

The protein belongs to the LZTS3 family. Interacts (via C-terminus) with SHANK3 (via PDZ domain). Interacts (via coiled coil) with SIPA1L1. Can form homooligomers.

It is found in the synapse. It localises to the postsynaptic density. Its subcellular location is the cell projection. The protein resides in the dendritic spine. The protein localises to the dendrite. It is found in the cytoplasm. It localises to the cytoskeleton. May be involved in promoting the maturation of dendritic spines, probably via regulating SIPA1L1 levels at the postsynaptic density of synapses. This chain is Leucine zipper putative tumor suppressor 3, found in Homo sapiens (Human).